The primary structure comprises 419 residues: Glutamate dehydrogenase (419 aa).

Lys105 is a catalytic residue. NAD(+) is bound at residue Gly219–Tyr225.

It belongs to the Glu/Leu/Phe/Val dehydrogenases family. In terms of assembly, homohexamer.

It is found in the cytoplasm. The catalysed reaction is L-glutamate + NAD(+) + H2O = 2-oxoglutarate + NH4(+) + NADH + H(+). It catalyses the reaction L-glutamate + NADP(+) + H2O = 2-oxoglutarate + NH4(+) + NADPH + H(+). The sequence is that of Glutamate dehydrogenase (gdhA) from Thermococcus litoralis (strain ATCC 51850 / DSM 5473 / JCM 8560 / NS-C).